Consider the following 428-residue polypeptide: Adenylosuccinate synthetase (428 aa).

GTP is bound by residues 12–18 (GDEGKGK) and 40–42 (GHT). The active-site Proton acceptor is the aspartate 13. Mg(2+)-binding residues include aspartate 13 and glycine 40. Residues 13 to 16 (DEGK), 38 to 41 (NAGH), threonine 129, arginine 143, glutamine 224, threonine 239, and arginine 303 contribute to the IMP site. The active-site Proton donor is histidine 41. Residue 299-305 (VTTGRIR) participates in substrate binding. Residues arginine 305, 331-333 (KVD), and 410-412 (AYG) each bind GTP.

The protein belongs to the adenylosuccinate synthetase family. As to quaternary structure, homodimer. Mg(2+) is required as a cofactor.

It is found in the cytoplasm. It catalyses the reaction IMP + L-aspartate + GTP = N(6)-(1,2-dicarboxyethyl)-AMP + GDP + phosphate + 2 H(+). Its pathway is purine metabolism; AMP biosynthesis via de novo pathway; AMP from IMP: step 1/2. Plays an important role in the de novo pathway of purine nucleotide biosynthesis. Catalyzes the first committed step in the biosynthesis of AMP from IMP. This Francisella philomiragia subsp. philomiragia (strain ATCC 25017 / CCUG 19701 / FSC 153 / O#319-036) protein is Adenylosuccinate synthetase.